The sequence spans 1481 residues: RNA helicase aquarius (1481 aa).

The interval 1–416 (MAAPAQPKKI…LVSRHERRIS (416 aa)) is helical region with structural similarity to ARM repeat domains. Residues 417–1481 (QIQQLNQMPL…DAESVPTETE (1065 aa)) are required for assembly of the IB complex. The tract at residues 754-773 (RSGKGKKRKDADGEEDDTEE) is disordered. ATP contacts are provided by residues Q801, Q806, and 826-831 (GTGKTD). K1055 is subject to N6-acetyllysine. Positions 1396–1414 (EEGEEGQSQETEMEAEEET) are enriched in acidic residues. Residues 1396–1481 (EEGEEGQSQE…DAESVPTETE (86 aa)) form a disordered region. Residues 1418-1448 (QGNLTPSPADASLSQETPAAQPDCSSQTEDT) are compositionally biased toward polar residues. Positions 1455–1468 (ATAAEPVSAAAEAA) are enriched in low complexity.

This sequence belongs to the CWF11 family. In terms of assembly, identified in the spliceosome C complex. Component of the XAB2 complex, a multimeric protein complex composed of XAB2, PRPF19, AQR, ZNF830, ISY1, and PPIE. Identified in a pentameric intron-binding (IB) complex composed of AQR, XAB2, ISY1, ZNF830 and PPIE that is incorporated into the spliceosome as a preassembled complex. The IB complex does not contain PRPF19. Within the spliceosome, interacts with SNRPA1, SF3B1, SF3B3, SF3A1 and SF3A2.

It is found in the nucleus. Its subcellular location is the nucleoplasm. The catalysed reaction is ATP + H2O = ADP + phosphate + H(+). Its function is as follows. Involved in pre-mRNA splicing as component of the spliceosome. Intron-binding spliceosomal protein required to link pre-mRNA splicing and snoRNP (small nucleolar ribonucleoprotein) biogenesis. Plays a key role in position-dependent assembly of intron-encoded box C/D small snoRNP, splicing being required for snoRNP assembly. May act by helping the folding of the snoRNA sequence. Binds to intron of pre-mRNAs in a sequence-independent manner, contacting the region between snoRNA and the branchpoint of introns (40 nucleotides upstream of the branchpoint) during the late stages of splicing. Has ATP-dependent RNA helicase activity and can unwind double-stranded RNA molecules with a 3' overhang (in vitro). This chain is RNA helicase aquarius (Aqr), found in Mus musculus (Mouse).